The sequence spans 312 residues: G-protein coupled receptor BILF1 (312 aa).

The Extracellular segment spans residues 1 to 40; it reads MLSTMAPGSTVGTLVANMTSVNATEDACTKSYSAFLSGMT. 2 cysteine pairs are disulfide-bonded: cysteine 28-cysteine 258 and cysteine 97-cysteine 174. Residues 41–61 traverse the membrane as a helical segment; it reads SLLLVLLILLTLAGILFIIFV. Residues 62-67 are Cytoplasmic-facing; the sequence is RKLVHR. A helical membrane pass occupies residues 68-88; the sequence is MDVWLIALLIELLLWVLGKMI. The Extracellular portion of the chain corresponds to 89–95; it reads QEFSSTG. Residues 96–116 traverse the membrane as a helical segment; the sequence is LCLLTQNMMFLGLMCSVWTHL. The Cytoplasmic portion of the chain corresponds to 117–138; sequence GMALEKTLALFSRTPKRTSHRN. A helical transmembrane segment spans residues 139 to 159; it reads VCLYLMGVFCLVLLLIIILLI. Topologically, residues 160 to 192 are extracellular; it reads TMGPDANLNRGPNMCREGPTKGMHTAVQGLKAG. Residues 193–213 traverse the membrane as a helical segment; that stretch reads CYLLAAVLIVLLTVIIIWKLL. The Cytoplasmic portion of the chain corresponds to 214–228; sequence RTKFGRKPRLICNVT. The chain crosses the membrane as a helical span at residues 229-249; that stretch reads FTGLICAFSWFMLSLPLLFLG. Topologically, residues 250–269 are extracellular; sequence EAGSLGFDCTESLVARYYPG. Residues 270–290 traverse the membrane as a helical segment; it reads PAACLALLLIILYAWSFSHFM. The Cytoplasmic portion of the chain corresponds to 291–312; it reads DSLKNQVTVTARYFRRVPSQST.

It belongs to the Epstein-Barr virus BILF1 protein family. In terms of assembly, interacts with host CXCR4 to form higher-order heterooligomers. Interacts with host Gi heterotrimer.

The protein localises to the host cell membrane. It is found in the host mitochondrion outer membrane. In terms of biological role, constitutively active, ligand-independent G protein-coupled receptor that has immunoevasive and oncogenic activities. Couples with the host inhibitory G protein (Gi) in order to disrupt the host chemokine signaling. As a consequence of its constitutive activity, mediates host CXCR4 inhibition. Enhances degradation of host major histocompatibility complex class I antigens via lysosomes, thereby modulating the antigen presentation to cytotoxic T cells. Targets selectively HLA-A, HLA-Band HLA-E molecules. Targets also newly synthesized MHC-I/peptide complexes en route to the host cell surface. Inhibits the host EIF2AK2/PKR phosphorylation. Displays tranforming activity. Utilizes its C-terminal tail to trigger host MAVS UFMylation via PARK2, resulting in selective MAVS removal from mitochondrial membranes and routing to lysosomes to prevent viral activation of the NLRP3 inflammasome. The chain is G-protein coupled receptor BILF1 from Homo sapiens (Human).